A 271-amino-acid polypeptide reads, in one-letter code: 3-deoxy-manno-octulosonate cytidylyltransferase (271 aa).

It belongs to the KdsB family.

The protein resides in the cytoplasm. The enzyme catalyses 3-deoxy-alpha-D-manno-oct-2-ulosonate + CTP = CMP-3-deoxy-beta-D-manno-octulosonate + diphosphate. It participates in nucleotide-sugar biosynthesis; CMP-3-deoxy-D-manno-octulosonate biosynthesis; CMP-3-deoxy-D-manno-octulosonate from 3-deoxy-D-manno-octulosonate and CTP: step 1/1. It functions in the pathway bacterial outer membrane biogenesis; lipopolysaccharide biosynthesis. Activates KDO (a required 8-carbon sugar) for incorporation into bacterial lipopolysaccharide in Gram-negative bacteria. The sequence is that of 3-deoxy-manno-octulosonate cytidylyltransferase from Leptothrix cholodnii (strain ATCC 51168 / LMG 8142 / SP-6) (Leptothrix discophora (strain SP-6)).